The following is a 188-amino-acid chain: Putative 3-methyladenine DNA glycosylase (188 aa).

This sequence belongs to the DNA glycosylase MPG family.

The sequence is that of Putative 3-methyladenine DNA glycosylase from Ehrlichia ruminantium (Cowdria ruminantium).